The following is a 203-amino-acid chain: Pyrrolidone-carboxylate peptidase (203 aa).

Catalysis depends on residues Glu-78, Cys-141, and His-165.

Belongs to the peptidase C15 family. Homotetramer.

The protein resides in the cytoplasm. It catalyses the reaction Release of an N-terminal pyroglutamyl group from a polypeptide, the second amino acid generally not being Pro.. Functionally, removes 5-oxoproline from various penultimate amino acid residues except L-proline. This chain is Pyrrolidone-carboxylate peptidase, found in Thermoanaerobacter pseudethanolicus (strain ATCC 33223 / 39E) (Clostridium thermohydrosulfuricum).